A 203-amino-acid chain; its full sequence is Holliday junction branch migration complex subunit RuvA (203 aa).

The interval 1 to 64 (MFAYFRGRLT…EDAFLLYGFS (64 aa)) is domain I. The segment at 65 to 143 (SESERQLFRL…KMSPDGGKTI (79 aa)) is domain II. Residues 144 to 150 (ASGSGGN) are flexible linker. Residues 151–203 (LALQIKDDALNALITLGFSKPAAQKAVTGILEGNPSLSVEEVVKSALVSIHNS) form a domain III region.

It belongs to the RuvA family. As to quaternary structure, homotetramer. Forms an RuvA(8)-RuvB(12)-Holliday junction (HJ) complex. HJ DNA is sandwiched between 2 RuvA tetramers; dsDNA enters through RuvA and exits via RuvB. An RuvB hexamer assembles on each DNA strand where it exits the tetramer. Each RuvB hexamer is contacted by two RuvA subunits (via domain III) on 2 adjacent RuvB subunits; this complex drives branch migration. In the full resolvosome a probable DNA-RuvA(4)-RuvB(12)-RuvC(2) complex forms which resolves the HJ.

Its subcellular location is the cytoplasm. Its function is as follows. The RuvA-RuvB-RuvC complex processes Holliday junction (HJ) DNA during genetic recombination and DNA repair, while the RuvA-RuvB complex plays an important role in the rescue of blocked DNA replication forks via replication fork reversal (RFR). RuvA specifically binds to HJ cruciform DNA, conferring on it an open structure. The RuvB hexamer acts as an ATP-dependent pump, pulling dsDNA into and through the RuvAB complex. HJ branch migration allows RuvC to scan DNA until it finds its consensus sequence, where it cleaves and resolves the cruciform DNA. This Chlorobium limicola (strain DSM 245 / NBRC 103803 / 6330) protein is Holliday junction branch migration complex subunit RuvA.